The primary structure comprises 397 residues: 2-oxoglutarate and iron-dependent oxygenase domain-containing protein ICU11 (397 aa).

A disordered region spans residues 1-56 (MCNQTPLRSMALDSSGKQPEQQQQQQPRASSGNGEARLKLRRTPNEEHEPENYEDL). A compositionally biased stretch (low complexity) spans 18–27 (QPEQQQQQQP). A Fe2OG dioxygenase domain is found at 238-339 (SLDSHHGYIV…RANLILWCRS (102 aa)). The Fe cation site is built by His260, Asp262, and His320. Residue Arg330 participates in 2-oxoglutarate binding.

Fe(2+) is required as a cofactor. The cofactor is L-ascorbate. In terms of tissue distribution, expressed in roots, cotyledons, rosette leaves, cauline leaves and inflorescences.

The protein resides in the nucleus. It is found in the nucleoplasm. Functionally, participates in the epigenetic repression of flowering genes in association with CP2. Functions in the repression of several members of the MADS-box transcription factors family, including SEP3, during vegetative development via histone modification. This chain is 2-oxoglutarate and iron-dependent oxygenase domain-containing protein ICU11, found in Arabidopsis thaliana (Mouse-ear cress).